The chain runs to 649 residues: tRNA-guanine(15) transglycosylase (649 aa).

The Nucleophile role is filled by Asp-88. Positions 123 and 194 each coordinate substrate. The Zn(2+) site is built by Cys-280, Cys-282, and Cys-285. One can recognise a PUA domain in the interval 573 to 648; sequence NYRIVIDSSV…VAATLRGGIK (76 aa).

It belongs to the archaeosine tRNA-ribosyltransferase family. It depends on Zn(2+) as a cofactor.

It carries out the reaction guanosine(15) in tRNA + 7-cyano-7-deazaguanine = 7-cyano-7-carbaguanosine(15) in tRNA + guanine. Its pathway is tRNA modification; archaeosine-tRNA biosynthesis. Functionally, exchanges the guanine residue with 7-cyano-7-deazaguanine (preQ0) at position 15 in the dihydrouridine loop (D-loop) of archaeal tRNAs. The protein is tRNA-guanine(15) transglycosylase of Methanococcus maripaludis (strain C5 / ATCC BAA-1333).